We begin with the raw amino-acid sequence, 416 residues long: Glutamate dehydrogenase A2 (416 aa).

The active site involves Lys105.

The protein belongs to the Glu/Leu/Phe/Val dehydrogenases family. As to quaternary structure, homohexamer.

The protein is Glutamate dehydrogenase A2 (gdhA2) of Halobacterium salinarum (strain ATCC 700922 / JCM 11081 / NRC-1) (Halobacterium halobium).